The following is an 84-amino-acid chain: Cytochrome b559 subunit alpha (84 aa).

Residues 22–36 (IIHSITIPSLFVSGW) traverse the membrane as a helical segment. His24 is a binding site for heme.

It belongs to the PsbE/PsbF family. Heterodimer of an alpha subunit and a beta subunit. PSII is composed of 1 copy each of membrane proteins PsbA, PsbB, PsbC, PsbD, PsbE, PsbF, PsbH, PsbI, PsbJ, PsbK, PsbL, PsbM, PsbT, PsbX, PsbY, PsbZ, Psb30/Ycf12, at least 3 peripheral proteins of the oxygen-evolving complex and a large number of cofactors. It forms dimeric complexes. Requires heme b as cofactor.

It is found in the plastid. Its subcellular location is the chloroplast thylakoid membrane. In terms of biological role, this b-type cytochrome is tightly associated with the reaction center of photosystem II (PSII). PSII is a light-driven water:plastoquinone oxidoreductase that uses light energy to abstract electrons from H(2)O, generating O(2) and a proton gradient subsequently used for ATP formation. It consists of a core antenna complex that captures photons, and an electron transfer chain that converts photonic excitation into a charge separation. The chain is Cytochrome b559 subunit alpha from Phaeodactylum tricornutum (strain CCAP 1055/1).